A 125-amino-acid polypeptide reads, in one-letter code: Short coiled-coil protein (125 aa).

The disordered stretch occupies residues 1-31 (MSKMDGLSTGEEEDSTFTSISLEDDTDHSLK). Positions 43–101 (KMMNADMDAVDAENQVELEEKTRLINQVLELQHTLEDLSARVDAVKEENLKLKSENQVL) form a coiled coil.

It belongs to the SCOC family. Homodimer. Interacts with ARL1, ARL2 and ARL3. Directly interacts with FEZ1 and UVRAG. The interaction with UVRAG is reduced by amino acid starvation, but the complex is stabilized in the presence of FEZ1. Interacts with NRBF2.

Its subcellular location is the golgi apparatus membrane. It localises to the golgi apparatus. It is found in the trans-Golgi network. The protein localises to the cytoplasm. The protein resides in the cytosol. Functionally, positive regulator of amino acid starvation-induced autophagy. The chain is Short coiled-coil protein (Scoc) from Mus musculus (Mouse).